Here is a 582-residue protein sequence, read N- to C-terminus: ATP-dependent lipid A-core flippase (582 aa).

5 consecutive transmembrane segments (helical) span residues 16–36 (LWPM…ALII), 63–83 (VLLW…ASGF), 153–173 (IIGL…ILIV), 253–273 (PIIQ…ASFP), and 275–295 (VMET…IALM). One can recognise an ABC transmembrane type-1 domain in the interval 28 to 310 (AVAAIALIIN…LTNVNAQFQR (283 aa)). One can recognise an ABC transporter domain in the interval 342-578 (LEFRQVNFAY…NGAYAQLHRM (237 aa)). 376–383 (GRSGSGKS) is a binding site for ATP.

This sequence belongs to the ABC transporter superfamily. Lipid exporter (TC 3.A.1.106) family. As to quaternary structure, homodimer.

It localises to the cell inner membrane. The catalysed reaction is ATP + H2O + lipid A-core oligosaccharideSide 1 = ADP + phosphate + lipid A-core oligosaccharideSide 2.. In terms of biological role, involved in lipopolysaccharide (LPS) biosynthesis. Translocates lipid A-core from the inner to the outer leaflet of the inner membrane. Transmembrane domains (TMD) form a pore in the inner membrane and the ATP-binding domain (NBD) is responsible for energy generation. This chain is ATP-dependent lipid A-core flippase, found in Pectobacterium atrosepticum (strain SCRI 1043 / ATCC BAA-672) (Erwinia carotovora subsp. atroseptica).